The sequence spans 174 residues: Large ribosomal subunit protein uL18 (174 aa).

Belongs to the universal ribosomal protein uL18 family. In terms of assembly, part of the 50S ribosomal subunit. Contacts the 5S and 23S rRNAs.

Its function is as follows. This is one of the proteins that bind and probably mediate the attachment of the 5S RNA into the large ribosomal subunit, where it forms part of the central protuberance. The sequence is that of Large ribosomal subunit protein uL18 from Methanoregula boonei (strain DSM 21154 / JCM 14090 / 6A8).